The chain runs to 540 residues: MTLKSLPAWTALQSHFEQIRHARLRDWFAPENDRAPTRAERFTIPGGGLAADFSKNRIDDETLRLLVQLARDAGVEARRDAMFAGEIVNPTEGRAALHTALRATDPQAPFHAQVSAERAKMATFARAVRSGTWTGYTGKRIRHVINIGIGGSDLGPKMVVHALHHVATPEISTHFVSNVDGADLARVLEQVDPEETLAIIVSKTFTTLETMTNARSLRDWFVARGCPEDALAKHFVGVSANPAEVVKFGIAADNVFEMWDWVGGRYSLWSAVGLSIMIAIGPEQFDELLAGANDMDRHFREAPLERNLPVLLGLIGIWYRNFFGSQSYLVAPYSEALHYLPSYLQQLEMESNGKSARLDGTFVDYPTSAVTWGEPGTNGQHAFFQMLHQGPTIVPIDFIAVLTPEHPLASHHPKLLANCFAQSEALMLGRTLEEARKVAGPGKEALAPHLTFPGNRPTTTLLVDALTPRTLGALIALYEHKVLVQATVWDINPFDQWGVELGKILGKVVEADLSAESVDPAKHDSSTTALIERARAALKR.

Glu350 functions as the Proton donor in the catalytic mechanism. Active-site residues include His381 and Lys503.

Belongs to the GPI family.

It is found in the cytoplasm. It catalyses the reaction alpha-D-glucose 6-phosphate = beta-D-fructose 6-phosphate. It functions in the pathway carbohydrate biosynthesis; gluconeogenesis. It participates in carbohydrate degradation; glycolysis; D-glyceraldehyde 3-phosphate and glycerone phosphate from D-glucose: step 2/4. Its function is as follows. Catalyzes the reversible isomerization of glucose-6-phosphate to fructose-6-phosphate. The sequence is that of Glucose-6-phosphate isomerase from Burkholderia orbicola (strain MC0-3).